Reading from the N-terminus, the 245-residue chain is 8-amino-3,8-dideoxy-manno-octulosonate cytidylyltransferase (245 aa).

It belongs to the KdsB family.

Its subcellular location is the cytoplasm. The enzyme catalyses 8-amino-3,8-dideoxy-alpha-D-manno-octulosonate + CTP = CMP-8-amino-3,8-dideoxy-alpha-D-manno-oct-2-ulosonate + diphosphate. It participates in bacterial outer membrane biogenesis; lipopolysaccharide biosynthesis. Functionally, activates KDO8N (a required 8-carbon sugar) for incorporation into bacterial lipopolysaccharide in the Shewanella genus. This Shewanella pealeana (strain ATCC 700345 / ANG-SQ1) protein is 8-amino-3,8-dideoxy-manno-octulosonate cytidylyltransferase.